A 378-amino-acid polypeptide reads, in one-letter code: Dual-specificity RNA methyltransferase RlmN (378 aa).

The active-site Proton acceptor is the glutamate 96. In terms of domain architecture, Radical SAM core spans glutamine 102–aspartate 342. A disulfide bond links cysteine 109 and cysteine 345. [4Fe-4S] cluster-binding residues include cysteine 116, cysteine 120, and cysteine 123. S-adenosyl-L-methionine-binding positions include glycine 170–glutamate 171, serine 202, serine 224–histidine 226, and asparagine 302. Residue cysteine 345 is the S-methylcysteine intermediate of the active site.

Belongs to the radical SAM superfamily. RlmN family. Requires [4Fe-4S] cluster as cofactor.

The protein resides in the cytoplasm. The catalysed reaction is adenosine(2503) in 23S rRNA + 2 reduced [2Fe-2S]-[ferredoxin] + 2 S-adenosyl-L-methionine = 2-methyladenosine(2503) in 23S rRNA + 5'-deoxyadenosine + L-methionine + 2 oxidized [2Fe-2S]-[ferredoxin] + S-adenosyl-L-homocysteine. It carries out the reaction adenosine(37) in tRNA + 2 reduced [2Fe-2S]-[ferredoxin] + 2 S-adenosyl-L-methionine = 2-methyladenosine(37) in tRNA + 5'-deoxyadenosine + L-methionine + 2 oxidized [2Fe-2S]-[ferredoxin] + S-adenosyl-L-homocysteine. Its function is as follows. Specifically methylates position 2 of adenine 2503 in 23S rRNA and position 2 of adenine 37 in tRNAs. m2A2503 modification seems to play a crucial role in the proofreading step occurring at the peptidyl transferase center and thus would serve to optimize ribosomal fidelity. This Pseudomonas paraeruginosa (strain DSM 24068 / PA7) (Pseudomonas aeruginosa (strain PA7)) protein is Dual-specificity RNA methyltransferase RlmN.